A 255-amino-acid polypeptide reads, in one-letter code: NAD kinase (255 aa).

Aspartate 44 functions as the Proton acceptor in the catalytic mechanism. NAD(+)-binding positions include 44–45, histidine 49, 114–115, aspartate 144, alanine 152, 155–160, and glutamine 216; these read DG, NE, and SAYNLS.

It belongs to the NAD kinase family. A divalent metal cation serves as cofactor.

It localises to the cytoplasm. The enzyme catalyses NAD(+) + ATP = ADP + NADP(+) + H(+). In terms of biological role, involved in the regulation of the intracellular balance of NAD and NADP, and is a key enzyme in the biosynthesis of NADP. Catalyzes specifically the phosphorylation on 2'-hydroxyl of the adenosine moiety of NAD to yield NADP. The chain is NAD kinase from Rickettsia rickettsii (strain Iowa).